The following is a 393-amino-acid chain: MTRIGTPLSPTATRVLLCGCGELGKEVVIELQRLGVEVIAVDRYANAPAMQVAHRSHVINMLDGVALRAVIEAEKPHYIVPEIEAIATATLVELENEGFNVVPTARATQLTMNREGIRRLAAEELDLPTSPYHFADTFEDYSKAVADLGYPCVVKPVMSSSGKGQSLLRSADDLQKAWDYAQEGGRAGKGRVIIEGFIDFEYEITLLTVRHVGGTTFLEPVGHRQEKGDYQESWQPQAMSPKALAESQRVAQAVTDALGGRGLFGVELFVKGDQVWFSEVSPRPHDTGLVTLISQELSQFALHARAILGLPIPVVRQFGPSASAVILPEGQSQQTSFANLGAALSEPDTAIRLFGKPEINGTRRMGVCLARDESVEAARAKATRASQAVKVEF.

Residues 22-23 and glutamate 82 contribute to the N(1)-(5-phospho-beta-D-ribosyl)glycinamide site; that span reads EL. ATP is bound by residues arginine 114, lysine 155, 160 to 165, 195 to 198, and glutamate 203; these read SSGKGQ and EGFI. Positions 119-308 constitute an ATP-grasp domain; it reads RLAAEELDLP…QFALHARAIL (190 aa). The Mg(2+) site is built by glutamate 267 and glutamate 279. N(1)-(5-phospho-beta-D-ribosyl)glycinamide contacts are provided by residues aspartate 286, lysine 356, and 363–364; that span reads RR.

The protein belongs to the PurK/PurT family. Homodimer.

The catalysed reaction is N(1)-(5-phospho-beta-D-ribosyl)glycinamide + formate + ATP = N(2)-formyl-N(1)-(5-phospho-beta-D-ribosyl)glycinamide + ADP + phosphate + H(+). The protein operates within purine metabolism; IMP biosynthesis via de novo pathway; N(2)-formyl-N(1)-(5-phospho-D-ribosyl)glycinamide from N(1)-(5-phospho-D-ribosyl)glycinamide (formate route): step 1/1. Functionally, involved in the de novo purine biosynthesis. Catalyzes the transfer of formate to 5-phospho-ribosyl-glycinamide (GAR), producing 5-phospho-ribosyl-N-formylglycinamide (FGAR). Formate is provided by PurU via hydrolysis of 10-formyl-tetrahydrofolate. This is Formate-dependent phosphoribosylglycinamide formyltransferase from Pseudomonas entomophila (strain L48).